Here is a 380-residue protein sequence, read N- to C-terminus: uncharacterized protein (380 aa).

Residues 1 to 18 (MALRHLALLAGLLVGVAS) form the signal peptide. N-linked (GlcNAc...) asparagine glycosylation is found at asparagine 104, asparagine 111, and asparagine 128. Residues 148-168 (LFLGTFFISSGLILSVAGFFY) form a helical membrane-spanning segment. Disordered regions lie at residues 229–256 (PQTG…QGQG) and 336–380 (RFSG…ISNV). Pro residues predominate over residues 240–249 (PPLPGSPGDP). Residues 356-366 (VRRERPLDRAT) are compositionally biased toward basic and acidic residues.

Its subcellular location is the membrane. This is an uncharacterized protein from Homo sapiens (Human).